The following is a 1889-amino-acid chain: MEMEANDHFNFTGLPPAPAASGLKPSPSSGEGLYTNGSPMNFPQQGKSLNGDVNVNGLSTVSHTTTSGILNSAPHSSSTSHLHHPNVAYDCLWNYSQYPSANPGNNLKDPPLLSQFPGGQYPLNGILGGNRQPSSPSHNTNLRAGSQEFWANGTQSPMGLNFDSQELYDSFPDQNFEVMPNGPPSFFTSPQTSPMLGSSIQTFAPSQDVSSDIHPDEAAEKELTSVVAENGTGLVGSLELEEEQPELKMCGYNGSVSSVESLHQEVSVLVPDPTVSCLDDPSHLPDQLEDTPILSEDSLEPFDSLAAEPVSGSLYGIDDAELMGAEDKLPLEGNPVISALDCPALSNANAFSLLADDSQTSASIFVSPTSPPVLGESVLQDNSFGLNSCSDSEQEEIETQSSNFQRPLTEPAPDQPPSTQLHPAVSPTASPAASLTASAEISPAVSPVASSPVPPEVFVAVSPASSPALPAISLEASMTTPVTSPQGSPEPSPAAAFQTVSPARKNVSSAPKARADREETTGGAVAVSGSGDVLKRRIATPEEVRLPLQHGWRREVRIKKGSHRWQGETWYYGPCGKRMKQFPEVIKYLSRNVVHSVRREHFSFSPRMPVGDFFEERDTPEGLQWVQLSAEEIPSRIQAITGKRGRPRNNEKAKNKEVPKVKRGRGRPPKIKMPELLNKTDNRLPKKLETQEILSEDDKAKMTKNKKKMRQKVQRGESQTPVQGQARNKRKQDTKSLKQKDTKKKLKAEKEKMKTKQEKLKEKVKREKKEKVKAKGKEGPRARPSCRADKTLATQKRLEEQQRQQAILEEMKKPTEGMCLSDHQPLPDFTRIPGLTLSSRAFSDCLTIVEFLHSFGKVLGFDLTKDVPSLGVLQEGLLCQGDSLDKVQDLLVRLLKAALHDPGLPPYCQSLKILGEKMSEIPLTRDNVSEILRCFLMAYRVEPPFCDSLRTQPFQAQPPQQKAAILAFLVHELNSSTIIINEIDKTLESVSSCRKNKWIVEGRLRRLKTALAKRTGRPEVMMEGAEDGLGRRRSSRIMEETSGIEEEEEEENTTAVHGRRGRKEGEIDVAASSIPELERHIEKLSKRQLFFRKKLLHSSQMLRAVSLGQDRYRRHYWVLPYLAGIFVEGSEGSTVTEDEIKQETESLMEVVTSTPSSARASVKRELTGSNASTSPARSRGRPRKPKPGSLQPQHLQSTIRECDSEQAQTQVHPEPQPQLQAPTQPHLQPSSGFLEPEGSPFSLGQSQHDLSQSAFLSWLSQTQSHNSLLSSSVLTPDSSPGKLDSAPSQSLEEPEPDEAQSCPGPQGPWFNFSAQIPCDAAPTPPPAVSEDQPTPSLQLLASSKPMNTPGAANPCSPVQLSSTHLPGGTPKRLSGDSEEMSQSPTGLGQPKRRGRPPSKFFKQVEQHYLTQLTAQPIPPEMCSGWWWIRDPETLDVLLKALHPRGIREKALHKHLSKHKDFLQEVCLQPLTDPIFEPNELPALEEGVMSWSPKEKTYETDLAVLQWVEELEQRVVLSDLQIRGWTCPTPDSTREDLTYCEHLPDSPEDIPWRGRGREGTVPQRQNNNPLDLAVMRLAVLEQNVERRYLREPLWAAHEVVVEKALLSTPNGAPDGTSTEISYEITPRVRVWRQTLERCRSAAQVCLCMGQLERSIAWEKSVNKVTCLVCRKGDNDEFLLLCDGCDRGCHIYCHRPKMEAVPEGDWFCAVCLSQQVEEEYTQRPGFPKRGQKRKSSFPLTFPEGDSRRRMLSRSRDSPAVPRYPEDGLSPPKRRRHSMRSHHSDLTFCEIILMEMESHDAAWPFLEPVNPRLVSGYRRVIKNPMDFSTMRERLLRGGYTSSEEFAADALLVFDNCQTFNEDDSEVGKAGHVMRRFFESRWEEFYQGKQANL.

Disordered regions lie at residues 1-59 (MEME…NGLS), 384-433 (FGLN…SPAA), and 479-526 (TTPV…GAVA). Polar residues predominate over residues 35-59 (TNGSPMNFPQQGKSLNGDVNVNGLS). The tract at residues 332 to 726 (EGNPVISALD…ESQTPVQGQA (395 aa)) is required for TTF1 binding. Over residues 423-433 (PAVSPTASPAA) the composition is skewed to low complexity. 2 stretches are compositionally biased toward polar residues: residues 479-489 (TTPVTSPQGSP) and 498-509 (QTVSPARKNVSS). Phosphothreonine is present on threonine 499. Serine 501 bears the Phosphoserine mark. An MBD domain is found at 538–609 (IATPEEVRLP…EHFSFSPRMP (72 aa)). Residue threonine 540 is modified to Phosphothreonine. Residue serine 605 is modified to Phosphoserine. The segment at 638–791 (QAITGKRGRP…ARPSCRADKT (154 aa)) is disordered. 2 DNA-binding regions (a.T hook) span residues 641 to 653 (TGKR…NEKA) and 662 to 674 (KRGR…IKMP). Positions 648-660 (RNNEKAKNKEVPK) are enriched in basic and acidic residues. Residues 661-670 (VKRGRGRPPK) are compositionally biased toward basic residues. Lysine 672 is subject to N6-acetyllysine; by KAT8. Positions 678-701 (NKTDNRLPKKLETQEILSEDDKAK) are enriched in basic and acidic residues. Residues 686 to 813 (KKLETQEILS…QQAILEEMKK (128 aa)) adopt a coiled-coil conformation. Positions 702–713 (MTKNKKKMRQKV) are enriched in basic residues. Residues 716–726 (GESQTPVQGQA) are compositionally biased toward polar residues. 2 stretches are compositionally biased toward basic and acidic residues: residues 731-740 (KQDTKSLKQK) and 748-791 (AEKE…ADKT). Lysine 790 bears the N6-acetyllysine mark. The DDT domain maps to 839 to 904 (SRAFSDCLTI…LKAALHDPGL (66 aa)). A Glycyl lysine isopeptide (Lys-Gly) (interchain with G-Cter in SUMO2) cross-link involves residue lysine 857. The interval 1039 to 1063 (EETSGIEEEEEEENTTAVHGRRGRK) is disordered. A Phosphoserine modification is found at serine 1042. Acidic residues predominate over residues 1042-1052 (SGIEEEEEEEN). Glycyl lysine isopeptide (Lys-Gly) (interchain with G-Cter in SUMO2) cross-links involve residues lysine 1141 and lysine 1163. Disordered regions lie at residues 1147 to 1247 (LMEV…GQSQ) and 1269 to 1397 (LSSS…GRPP). Serine 1174 is subject to Phosphoserine. Positions 1176–1188 (ARSRGRPRKPKPG) form a DNA-binding region, a.T hook 3. 3 stretches are compositionally biased toward polar residues: residues 1190–1231 (LQPQ…QPSS), 1269–1278 (LSSSVLTPDS), and 1331–1346 (DQPT…SKPM). Phosphoserine occurs at positions 1374, 1377, and 1383. The a.T hook 4 DNA-binding region spans 1390–1402 (PKRRGRPPSKFFK). Serine 1545 bears the Phosphoserine mark. Residues lysine 1662 and lysine 1695 each participate in a glycyl lysine isopeptide (Lys-Gly) (interchain with G-Cter in SUMO2) cross-link. Residues 1662-1712 (KVTCLVCRKGDNDEFLLLCDGCDRGCHIYCHRPKMEAVPEGDWFCAVCLSQ) form a PHD-type zinc finger. A disordered region spans residues 1720–1778 (QRPGFPKRGQKRKSSFPLTFPEGDSRRRMLSRSRDSPAVPRYPEDGLSPPKRRRHSMRS). At serine 1733 the chain carries Phosphoserine. Threonine 1738 is modified (phosphothreonine). Residues 1742–1754 (GDSRRRMLSRSRD) are compositionally biased toward basic and acidic residues. Residues serine 1755 and serine 1767 each carry the phosphoserine modification. A compositionally biased stretch (basic residues) spans 1769-1778 (PKRRRHSMRS). In terms of domain architecture, Bromo spans 1777–1881 (RSHHSDLTFC…RFFESRWEEF (105 aa)).

Belongs to the WAL family. Component of the NoRC-1 ISWI chromatin remodeling complex at least composed of SMARCA1 and BAZ2A/TIP5, which regulates the spacing of histone octamers on the DNA template to facilitate access to DNA. Within the NoRC-1 ISWI chromatin remodeling complex interacts with SMARCA1; the interaction is direct. Component of the NoRC-5 ISWI chromatin remodeling complex (also called the NoRC nucleolar-remodeling complex), at least composed of SMARCA5/SNF2H and BAZ2A/TIP5, which regulates the spacing of histone octamers on the DNA template to facilitate access to DNA. Within the NoRC-5 ISWI chromatin remodeling complexes interacts with SMARCA5/SNF2H; the interaction is direct. Interacts with TTF1; the interaction is required for recruitment of the NoRC-5 ISWI chromatin remodeling complex to rDNA. Interacts with HDAC1. Interacts with SIN3A. Interacts with DNMT1 and DNM3B. Interacts with BEND3 and USP21. Ubiquitinated. Deubiquitinated by USP21 leading to its stabilization. Post-translationally, acetylation at Lys-672 by KAT8/MOF promotes its dissociation from pRNA, affecting heterochromatin formation, nucleosome positioning and rDNA silencing. Deacetylation by SIRT1 in late S phase enhances pRNA-binding, allowing de novo DNA methylation and heterochromatin formation. Acetylation is high during S phase and declines to background levels in late S phase when the silent copies of rRNA genes are replicated.

The protein resides in the nucleus. It localises to the nucleolus. In terms of biological role, regulatory subunit of the ATP-dependent NoRC-1 and NoRC-5 ISWI chromatin remodeling complexes, which form ordered nucleosome arrays on chromatin and facilitate access to DNA during DNA-templated processes such as DNA replication, transcription, and repair. Both complexes regulate the spacing of nucleosomes along the chromatin and have the ability to slide mononucleosomes to the center of a DNA template. Directly stimulates the ATPase activity of SMARCA5 in the NoRC-5 ISWI chromatin remodeling complex. The NoRC-1 ISWI chromatin remodeling complex has a lower ATP hydrolysis rate than the NoRC-5 ISWI chromatin remodeling complex. Within the NoRC-5 ISWI chromatin remodeling complex, mediates silencing of a fraction of rDNA by recruiting histone-modifying enzymes and DNA methyltransferases, leading to heterochromatin formation and transcriptional silencing. In the complex, it plays a central role by being recruited to rDNA and by targeting chromatin modifying enzymes such as HDAC1, leading to repress RNA polymerase I transcription. Recruited to rDNA via its interaction with TTF1 and its ability to recognize and bind histone H4 acetylated on 'Lys-16' (H4K16ac), leading to deacetylation of H4K5ac, H4K8ac, H4K12ac but not H4K16ac. Specifically binds pRNAs, 150-250 nucleotide RNAs that are complementary in sequence to the rDNA promoter; pRNA-binding is required for heterochromatin formation and rDNA silencing. The protein is Bromodomain adjacent to zinc finger domain protein 2A (Baz2a) of Mus musculus (Mouse).